A 249-amino-acid polypeptide reads, in one-letter code: Glutathione S-transferase S1 (249 aa).

The span at 1-38 shows a compositional bias: low complexity; that stretch reads MADEAQAPPAEGAPPAEGEAPPPAEGAEGAVEGGEAAP. The tract at residues 1–42 is disordered; that stretch reads MADEAQAPPAEGAPPAEGEAPPPAEGAEGAVEGGEAAPPAEP. One can recognise a GST N-terminal domain in the interval 48–125; that stretch reads HSYTLFYFNV…FLAKTVGLCG (78 aa). Glutathione is bound by residues tyrosine 54, tryptophan 85, lysine 89, 96 to 97, and 109 to 110; these read QM and QS. The GST C-terminal domain maps to 127 to 249; sequence TPWEDLQIDI…WIEKRPVTEV (123 aa).

It belongs to the GST superfamily. Sigma family. As to quaternary structure, homodimer.

The enzyme catalyses RX + glutathione = an S-substituted glutathione + a halide anion + H(+). In terms of biological role, conjugation of reduced glutathione to a wide number of exogenous and endogenous hydrophobic electrophiles. May be involved in the detoxification of metabolites produced during cellular division and morphogenesis. The chain is Glutathione S-transferase S1 from Drosophila melanogaster (Fruit fly).